Here is a 238-residue protein sequence, read N- to C-terminus: Bacterial microcompartment shell protein PduB (238 aa).

BMC circularly permuted domains lie at 14–125 and 126–225; these read FVGA…VYNA and KAGH…LSQF. A disulfide bridge links cysteine 158 with cysteine 197.

The protein belongs to the EutL/PduB family. Homotrimerizes to form a pseudohexamer with a central pore 7.5 Angstroms wide and 22 Angstroms long; the pore channel in the crystal binds up to 4 glycerol molecules. A disulfide bond forms in the pore, it is not clear if this is an artifact. The trimers pack into an array.

The protein resides in the bacterial microcompartment. The protein operates within polyol metabolism; 1,2-propanediol degradation. One of the major shell proteins of the bacterial microcompartment (BMC) dedicated to 1,2-propanediol (1,2-PD) degradation. Probably involved in a propanediol fermentation/reuterin formation pathway. The sequence is that of Bacterial microcompartment shell protein PduB from Limosilactobacillus reuteri (strain DSM 20016) (Lactobacillus reuteri).